A 108-amino-acid polypeptide reads, in one-letter code: uncharacterized protein (108 aa).

Residues 25–45 (VILKSFLLISSWVILVLLLVI) traverse the membrane as a helical segment.

It localises to the membrane. This is an uncharacterized protein from Saccharomyces cerevisiae (strain ATCC 204508 / S288c) (Baker's yeast).